The following is a 329-amino-acid chain: Deoxynucleotidyltransferase terminal-interacting protein 1 (329 aa).

The tract at residues 1 to 27 (MGATGDVEQPRGPGGAERGGPELGDAG) is disordered. The segment covering 12-22 (GPGGAERGGPE) has biased composition (gly residues). Residues 56–147 (MTTSFTDPAI…RLTHELPGIK (92 aa)) form an important for dimerization region. The a.T hook DNA-binding region spans 159–173 (RGSPIPKKRKGRPPG). S161 bears the Phosphoserine mark. A Nuclear localization signal motif is present at residues 164 to 170 (PKKRKGR). The interval 197–316 (REGPKWDPAR…MRKYMETLRT (120 aa)) is important for DNA and nucleosome binding. The H-T-H motif DNA-binding region spans 216-237 (GSRANKALGMGGTRGRIYIKHP).

As to quaternary structure, monomer and homodimer. A minor proportion may form homotrimers. Interacts with ZNF541. Interacts with the terminal deoxynucleotidyltransferase DNTT. Interacts with TRERF1. Identified in a histone deacetylase complex that contains DNTTIP1, HDAC1 and MIDEAS; this complex assembles into a tetramer that contains four copies of each protein chain. Component of a histone deacetylase complex containing DNTTIP1, ZNF541, HDAC1 and HDAC2. Identified in a complex with KCTD19, HDAC1, HDAC2 and ZNF541.

The protein resides in the nucleus. Functionally, increases DNTT terminal deoxynucleotidyltransferase activity (in vitro). Also acts as a transcriptional regulator, binding to the consensus sequence 5'-GNTGCATG-3' following an AT-tract. Associates with RAB20 promoter and positively regulates its transcription. Binds DNA and nucleosomes; may recruit HDAC1 complexes to nucleosomes or naked DNA. This Bos taurus (Bovine) protein is Deoxynucleotidyltransferase terminal-interacting protein 1 (DNTTIP1).